Reading from the N-terminus, the 147-residue chain is Holo-[acyl-carrier-protein] synthase (147 aa).

Mg(2+) is bound by residues Asp-7 and Glu-60.

This sequence belongs to the P-Pant transferase superfamily. AcpS family. Mg(2+) serves as cofactor.

Its subcellular location is the cytoplasm. The catalysed reaction is apo-[ACP] + CoA = holo-[ACP] + adenosine 3',5'-bisphosphate + H(+). Functionally, transfers the 4'-phosphopantetheine moiety from coenzyme A to a Ser of acyl-carrier-protein. This is Holo-[acyl-carrier-protein] synthase from Bifidobacterium animalis subsp. lactis (strain AD011).